The following is a 190-amino-acid chain: Small ribosomal subunit protein uS5 (190 aa).

Positions 22–85 (FVDKLVHINR…DSAKRNLTRV (64 aa)) constitute an S5 DRBM domain.

The protein belongs to the universal ribosomal protein uS5 family. Part of the 30S ribosomal subunit. Contacts proteins S4 and S8.

Its function is as follows. With S4 and S12 plays an important role in translational accuracy. Located at the back of the 30S subunit body where it stabilizes the conformation of the head with respect to the body. This Bradyrhizobium sp. (strain BTAi1 / ATCC BAA-1182) protein is Small ribosomal subunit protein uS5.